The chain runs to 279 residues: MTARMDKRFAALKAEGRPALVTYFMGGDPDYDTSLGIMKALPEAGADVIELGMPFSDPMADGPAIQLAGQRALKAGQTLKKTLQLAADFRKTDGDTPIVLMGYYNPIYIYGVETFLDDAIAAGIDGLIVVDLPPEMDDELCIPAIRKGINFIRLATPTTDEKRLPAVLKNTSGFVYYVSMNGITGSALPDPSLVSGAVKRIKQHTDLPVCVGFGVKTAEHAKLIGASADGVVVGTAIVNQIATSLTKDGKAGADTIQAVATLVRGLSTGTRSARLVAAE.

Catalysis depends on proton acceptor residues glutamate 50 and aspartate 61.

It belongs to the TrpA family. In terms of assembly, tetramer of two alpha and two beta chains.

The enzyme catalyses (1S,2R)-1-C-(indol-3-yl)glycerol 3-phosphate + L-serine = D-glyceraldehyde 3-phosphate + L-tryptophan + H2O. It functions in the pathway amino-acid biosynthesis; L-tryptophan biosynthesis; L-tryptophan from chorismate: step 5/5. Its function is as follows. The alpha subunit is responsible for the aldol cleavage of indoleglycerol phosphate to indole and glyceraldehyde 3-phosphate. This chain is Tryptophan synthase alpha chain, found in Rhizobium rhizogenes (strain K84 / ATCC BAA-868) (Agrobacterium radiobacter).